The chain runs to 283 residues: Thymidylate synthase (283 aa).

DUMP is bound at residue arginine 22. Cysteine 160 serves as the catalytic Nucleophile. Residues 180 to 183, asparagine 191, and 221 to 223 contribute to the dUMP site; these read RSCD and HIY. (6R)-5,10-methylene-5,6,7,8-tetrahydrofolate is bound at residue aspartate 183. Serine 282 lines the (6R)-5,10-methylene-5,6,7,8-tetrahydrofolate pocket.

The protein belongs to the thymidylate synthase family. Bacterial-type ThyA subfamily. As to quaternary structure, homodimer.

The protein localises to the cytoplasm. The catalysed reaction is dUMP + (6R)-5,10-methylene-5,6,7,8-tetrahydrofolate = 7,8-dihydrofolate + dTMP. Its pathway is pyrimidine metabolism; dTTP biosynthesis. Its function is as follows. Catalyzes the reductive methylation of 2'-deoxyuridine-5'-monophosphate (dUMP) to 2'-deoxythymidine-5'-monophosphate (dTMP) while utilizing 5,10-methylenetetrahydrofolate (mTHF) as the methyl donor and reductant in the reaction, yielding dihydrofolate (DHF) as a by-product. This enzymatic reaction provides an intracellular de novo source of dTMP, an essential precursor for DNA biosynthesis. The polypeptide is Thymidylate synthase (Shewanella loihica (strain ATCC BAA-1088 / PV-4)).